The primary structure comprises 189 residues: Elongation factor P (189 aa).

The residue at position 34 (K34) is an N6-(3,6-diaminohexanoyl)-5-hydroxylysine.

It belongs to the elongation factor P family. Post-translationally, may be beta-lysylated on the epsilon-amino group of Lys-34 by the combined action of EpmA and EpmB, and then hydroxylated on the C5 position of the same residue by EpmC (if this protein is present). Lysylation is critical for the stimulatory effect of EF-P on peptide-bond formation. The lysylation moiety may extend toward the peptidyltransferase center and stabilize the terminal 3-CCA end of the tRNA. Hydroxylation of the C5 position on Lys-34 may allow additional potential stabilizing hydrogen-bond interactions with the P-tRNA.

The protein localises to the cytoplasm. It participates in protein biosynthesis; polypeptide chain elongation. Involved in peptide bond synthesis. Alleviates ribosome stalling that occurs when 3 or more consecutive Pro residues or the sequence PPG is present in a protein, possibly by augmenting the peptidyl transferase activity of the ribosome. Modification of Lys-34 is required for alleviation. The chain is Elongation factor P from Teredinibacter turnerae (strain ATCC 39867 / T7901).